The following is an 802-amino-acid chain: Xylanase/beta-glucanase (802 aa).

The first 31 residues, 1-31 (MKKSIFKRYAAAVGLMASVLMFTAVPTTSNA), serve as a signal peptide directing secretion. The region spanning 32-239 (ADDQKTGKVG…SNGSANVKSI (208 aa)) is the GH11 domain. The Nucleophile role is filled by Glu124. Glu226 functions as the Proton donor in the catalytic mechanism. The tract at residues 245–523 (IDIPDPEPIK…SYLEGHDPSK (279 aa)) is b. The CBM-cenC domain maps to 258-404 (NGYYLKENFE…YMDGAYAGVK (147 aa)). 2 disordered regions span residues 414 to 436 (SQSV…PSVT) and 533 to 564 (TTTT…YRDL). Low complexity-rich tracts occupy residues 419 to 436 (PPVT…PSVT) and 533 to 553 (TTTT…TTTT). In terms of domain architecture, Dockerin spans 434 to 513 (SVTKWGDANC…LIRAISELPE (80 aa)). Residues 524–555 (TTTTTTRITTTTTTTTTTTTSKTTTTTTTTSP) form a linker region. Positions 556–792 (AMHGGYRDLG…WVTYNKNGVQ (237 aa)) constitute a GH16 domain. The active-site Nucleophile is the Glu684.

It in the N-terminal section; belongs to the glycosyl hydrolase 11 (cellulase G) family. The protein in the C-terminal section; belongs to the glycosyl hydrolase 16 family.

The catalysed reaction is Endohydrolysis of (1-&gt;4)-beta-D-xylosidic linkages in xylans.. It carries out the reaction Hydrolysis of (1-&gt;4)-beta-D-glucosidic linkages in beta-D-glucans containing (1-&gt;3)- and (1-&gt;4)-bonds.. Its pathway is glycan degradation; xylan degradation. Contains two catalytic domains with xylanase and endo-beta-1,3-1,4 glucanase activities. In Ruminococcus flavefaciens, this protein is Xylanase/beta-glucanase (xynD).